The following is a 307-amino-acid chain: Methionyl-tRNA formyltransferase (307 aa).

108-111 (SLLP) lines the (6S)-5,6,7,8-tetrahydrofolate pocket.

It belongs to the Fmt family.

The catalysed reaction is L-methionyl-tRNA(fMet) + (6R)-10-formyltetrahydrofolate = N-formyl-L-methionyl-tRNA(fMet) + (6S)-5,6,7,8-tetrahydrofolate + H(+). In terms of biological role, attaches a formyl group to the free amino group of methionyl-tRNA(fMet). The formyl group appears to play a dual role in the initiator identity of N-formylmethionyl-tRNA by promoting its recognition by IF2 and preventing the misappropriation of this tRNA by the elongation apparatus. This is Methionyl-tRNA formyltransferase from Xanthomonas oryzae pv. oryzae (strain MAFF 311018).